A 317-amino-acid polypeptide reads, in one-letter code: Olfactory receptor 51Q1 (317 aa).

At 1 to 27 the chain is on the extracellular side; that stretch reads MSQVTNTTQEGIYFILTDIPGFEASHI. N6 carries an N-linked (GlcNAc...) asparagine glycan. Residues 28-48 form a helical membrane-spanning segment; sequence WISIPVCCLYTISIMGNTTIL. Residues 49–56 are Cytoplasmic-facing; it reads TVIRTEPS. The helical transmembrane segment at 57–77 threads the bilayer; it reads VHQRMYLFLSMLALTDLGLTL. Residues 78–101 lie on the Extracellular side of the membrane; it reads TTLPTVMQLLWFNVRRISSEACFA. C99 and C191 are oxidised to a cystine. A helical membrane pass occupies residues 102–122; that stretch reads QFFFLHGFSFMESSVLLAMSV. At 123-141 the chain is on the cytoplasmic side; that stretch reads DCYVAICCPLHYASILTNE. Residues 142 to 162 traverse the membrane as a helical segment; that stretch reads VIGRTGLAIICCCVLAVLPSL. Residues 163-198 are Extracellular-facing; the sequence is FLLKRLPFCHSHLLSRSYCLHQDMIRLVCADIRLNS. Residues 199–219 traverse the membrane as a helical segment; that stretch reads WYGFALALLIIIVDPLLIVIS. Topologically, residues 220–239 are cytoplasmic; that stretch reads YTLILKNILGTATWAERLRA. The helical transmembrane segment at 240–260 threads the bilayer; sequence LNNCLSHILAVLVLYIPMVGV. At 261–275 the chain is on the extracellular side; that stretch reads SMTHRFAKHASPLVH. A helical membrane pass occupies residues 276–296; sequence VIMANIYLLAPPVMNPIIYSV. Residues 297 to 317 are Cytoplasmic-facing; it reads KNKQIQWGMLNFLSLKNMHSR.

This sequence belongs to the G-protein coupled receptor 1 family.

It is found in the cell membrane. Its function is as follows. Odorant receptor. The protein is Olfactory receptor 51Q1 (OR51Q1) of Homo sapiens (Human).